The sequence spans 708 residues: Exocyst complex component 5 (708 aa).

An N-acetylalanine modification is found at Ala2. Residues 40-101 (KRLLEEFVNH…AFQHFQELDE (62 aa)) are a coiled coil. A phosphothreonine mark is found at Thr122, Thr395, and Thr405. A Phosphoserine modification is found at Ser412.

It belongs to the SEC10 family. In terms of assembly, the exocyst complex is composed of EXOC1, EXOC2, EXOC3, EXOC4, EXOC5, EXOC6, EXOC7 and EXOC8. Interacts with EXOC3L1. As to expression, ubiquitous.

It localises to the cytoplasm. The protein resides in the midbody. Its function is as follows. Component of the exocyst complex involved in the docking of exocytic vesicles with fusion sites on the plasma membrane. This Rattus norvegicus (Rat) protein is Exocyst complex component 5 (Exoc5).